The following is a 305-amino-acid chain: Protoheme IX farnesyltransferase (305 aa).

9 helical membrane-spanning segments follow: residues 31–51, 52–72, 96–118, 123–145, 151–171, 179–199, 225–245, 247–267, and 281–301; these read VMSL…YSVH, PFIA…AGAI, VIES…FFMA, LLAS…IWLK, NIVI…AAVS, IILF…LALF, ILIY…IGMN, FIYL…AGSL, and FAYS…TNTI.

The protein belongs to the UbiA prenyltransferase family. Protoheme IX farnesyltransferase subfamily.

The protein resides in the cell membrane. It carries out the reaction heme b + (2E,6E)-farnesyl diphosphate + H2O = Fe(II)-heme o + diphosphate. Its pathway is porphyrin-containing compound metabolism; heme O biosynthesis; heme O from protoheme: step 1/1. Its function is as follows. Converts heme B (protoheme IX) to heme O by substitution of the vinyl group on carbon 2 of heme B porphyrin ring with a hydroxyethyl farnesyl side group. This chain is Protoheme IX farnesyltransferase, found in Rickettsia africae (strain ESF-5).